The primary structure comprises 319 residues: MKKDDSLKKFKYKVAAFYNFISIIDEEILLIKEELTNLATNQKIKGTILLASEGVNGTICGTENAIVLFIETLENLLKVSDINVKYSWCERQAFRRFKARKKKEIVTIGLKEINPTKSVGKYIKAGEWNQFLEDPDSVVIDTRNDYEIKIGNFAGALNPQTSSFREFPAWVQKHLKPLIEENPSLKIGMYCTGGIRCEKATSYLIEEGFSDVHHLEGGILKYLEDVSSENSLWNGECFVFDQRVSLDHELLPGSHRMCHACGLPISPEDLKKPTYIKGLQCDACVNKFTDSDRARFAERQRQIDEIMKRLPENSIWPSS.

The region spanning Glu-133–Ser-231 is the Rhodanese domain. Cys-191 serves as the catalytic Cysteine persulfide intermediate.

Belongs to the TrhO family.

It catalyses the reaction uridine(34) in tRNA + AH2 + O2 = 5-hydroxyuridine(34) in tRNA + A + H2O. Catalyzes oxygen-dependent 5-hydroxyuridine (ho5U) modification at position 34 in tRNAs. The protein is tRNA uridine(34) hydroxylase of Prochlorococcus marinus (strain NATL1A).